A 112-amino-acid polypeptide reads, in one-letter code: Nucleoid-associated protein lpg2755 (112 aa).

This sequence belongs to the YbaB/EbfC family. As to quaternary structure, homodimer.

It localises to the cytoplasm. The protein resides in the nucleoid. Its function is as follows. Binds to DNA and alters its conformation. May be involved in regulation of gene expression, nucleoid organization and DNA protection. The protein is Nucleoid-associated protein lpg2755 of Legionella pneumophila subsp. pneumophila (strain Philadelphia 1 / ATCC 33152 / DSM 7513).